We begin with the raw amino-acid sequence, 151 residues long: uncharacterized protein (151 aa).

This is an uncharacterized protein from Methanocaldococcus jannaschii (strain ATCC 43067 / DSM 2661 / JAL-1 / JCM 10045 / NBRC 100440) (Methanococcus jannaschii).